Consider the following 232-residue polypeptide: Large ribosomal subunit protein uL1 (232 aa).

It belongs to the universal ribosomal protein uL1 family. As to quaternary structure, part of the 50S ribosomal subunit.

Its function is as follows. Binds directly to 23S rRNA. The L1 stalk is quite mobile in the ribosome, and is involved in E site tRNA release. In terms of biological role, protein L1 is also a translational repressor protein, it controls the translation of the L11 operon by binding to its mRNA. This is Large ribosomal subunit protein uL1 from Stenotrophomonas maltophilia (strain R551-3).